The chain runs to 767 residues: Protein SQS1 (767 aa).

A compositionally biased stretch (basic residues) spans 1–17 (MAKRHSHYQGSRRRHAR). The tract at residues 1 to 60 (MAKRHSHYQGSRRRHARGSNSKKAGRGNAKGIQGRKIKKKPTPTNSWHNSSIPLGEGDLD) is disordered. Over residues 42–52 (TPTNSWHNSSI) the composition is skewed to polar residues. Phosphoserine is present on serine 105. Residues 176-185 (EDSENEDDDS) are compositionally biased toward acidic residues. The tract at residues 176–200 (EDSENEDDDSQNSPSTDHSLSSNES) is disordered. Phosphoserine occurs at positions 217, 255, 334, 343, and 345. A disordered region spans residues 466–493 (YSDIPISDSSDEGDSYEGDSYEDDEDMA). Over residues 474 to 492 (SSDEGDSYEGDSYEDDEDM) the composition is skewed to acidic residues. An R3H domain is found at 594 to 656 (GLHIQNIKDE…HTSVVVEKIK (63 aa)). The region spanning 720-767 (NENIGRRMLEKLGWKSGEGLGIQGNKGISEPIFAKIKKNRSGLRHSES) is the G-patch domain.

This sequence belongs to the SQS1 family.

The protein localises to the cytoplasm. The protein resides in the nucleus. In terms of biological role, may be involved in splicing since overexpression antagonizes the suppression of splicing defects by SPP382 mutants. This chain is Protein SQS1 (SQS1), found in Saccharomyces cerevisiae (strain YJM789) (Baker's yeast).